A 75-amino-acid chain; its full sequence is CDC42 small effector protein 2-B (75 aa).

Residues cysteine 10 and cysteine 11 are each lipidated (S-palmitoyl cysteine). One can recognise a CRIB domain in the interval 29 to 42; that stretch reads IGEPMNFVHTAHVG.

Belongs to the CDC42SE/SPEC family.

Its subcellular location is the cytoplasm. The protein resides in the cytoskeleton. It localises to the cell membrane. Functionally, probably involved in the organization of the actin cytoskeleton by acting downstream of CDC42, inducing actin filament assembly. This chain is CDC42 small effector protein 2-B (cdc42se2-b), found in Xenopus laevis (African clawed frog).